We begin with the raw amino-acid sequence, 273 residues long: Proteasome subunit beta (273 aa).

Positions 1-19 (MQESTANKVAANATSSFTE) are enriched in polar residues. A disordered region spans residues 1–23 (MQESTANKVAANATSSFTEHLQR). Residues 1 to 50 (MQESTANKVAANATSSFTEHLQRDRPELLPFNRSGQGSATAAAPLQVPHA) constitute a propeptide, removed in mature form; by autocatalysis. Catalysis depends on threonine 51, which acts as the Nucleophile.

The protein belongs to the peptidase T1B family. The 20S proteasome core is composed of 14 alpha and 14 beta subunits that assemble into four stacked heptameric rings, resulting in a barrel-shaped structure. The two inner rings, each composed of seven catalytic beta subunits, are sandwiched by two outer rings, each composed of seven alpha subunits. The catalytic chamber with the active sites is on the inside of the barrel. Has a gated structure, the ends of the cylinder being occluded by the N-termini of the alpha-subunits. Is capped by the proteasome-associated ATPase, ARC.

Its subcellular location is the cytoplasm. The catalysed reaction is Cleavage of peptide bonds with very broad specificity.. Its pathway is protein degradation; proteasomal Pup-dependent pathway. Its activity is regulated as follows. The formation of the proteasomal ATPase ARC-20S proteasome complex, likely via the docking of the C-termini of ARC into the intersubunit pockets in the alpha-rings, may trigger opening of the gate for substrate entry. Interconversion between the open-gate and close-gate conformations leads to a dynamic regulation of the 20S proteasome proteolysis activity. Component of the proteasome core, a large protease complex with broad specificity involved in protein degradation. In Pseudarthrobacter chlorophenolicus (strain ATCC 700700 / DSM 12829 / CIP 107037 / JCM 12360 / KCTC 9906 / NCIMB 13794 / A6) (Arthrobacter chlorophenolicus), this protein is Proteasome subunit beta.